Consider the following 61-residue polypeptide: Large ribosomal subunit protein bL32 (61 aa).

Basic residues predominate over residues 1 to 16 (MAVPKRKTSPSKRGMR). The interval 1-40 (MAVPKRKTSPSKRGMRRSADALKAPTYIEDKNSGELRRPH) is disordered. A compositionally biased stretch (basic and acidic residues) spans 28-40 (IEDKNSGELRRPH).

It belongs to the bacterial ribosomal protein bL32 family.

This is Large ribosomal subunit protein bL32 from Sinorhizobium medicae (strain WSM419) (Ensifer medicae).